A 2527-amino-acid chain; its full sequence is Leucine-rich repeat serine/threonine-protein kinase 2 (2527 aa).

Positions 1–969 (MASGACQGCE…RSSRLPSHMR (969 aa)) are required for RAB29-mediated activation. Residues 9-33 (CEEEEEEEALKKLIVRLNNVQEGKQ) are a coiled coil. Phosphoserine is present on residues S910, S935, S955, and S973. Residues 957-979 (ESLRSSRLPSHMRQSDSSSSLAS) are disordered. The segment covering 961–978 (SSRLPSHMRQSDSSSSLA) has biased composition (low complexity). LRR repeat units lie at residues 983–1004 (HITS…SQKC), 1012–1033 (HLTK…LCET), 1036–1057 (CLIH…VLKM), 1059–1080 (RITN…DPAM), 1084–1105 (SLKQ…LAQV), 1108–1129 (KLEQ…LSLK), 1130–1150 (ELKI…DFLE), 1156–1171 (ESFS…MPAL), 1174–1196 (SITS…FSLP), 1197–1218 (HLRS…AHWK), 1221–1245 (NLRE…HVWS), 1246–1267 (RVEK…IGCL), and 1269–1291 (NLTS…MGKL). Phosphoserine; by autocatalysis is present on S1292. Residues 1328-1511 (KAVPYNRMKL…KTIINESLNF (184 aa)) form the Roc domain. 1341–1348 (GNTGSGKT) is a GTP binding site. At S1444 the chain carries Phosphoserine. The 198-residue stretch at 1543 to 1740 (TEFPVINRKH…RMYWRQGIYL (198 aa)) folds into the COR domain. The 268-residue stretch at 1879 to 2146 (EAPEFLLGDG…LICLMRHILI (268 aa)) folds into the Protein kinase domain. L1885, D1887, G1888, G1891, V1893, A1904, K1906, M1947, E1948, A1950, S1954, and R1957 together coordinate ATP. D1994 serves as the catalytic Proton acceptor. ATP is bound by residues H1998, L2001, A2016, and D2017. 2098 to 2121 (EYGCAPWPMVEKLITKCLKENPQE) contributes to the GTP binding site. 7 WD repeats span residues 2139-2183 (CLMR…SLFD), 2188-2228 (RYSY…LVIN), 2233-2276 (TKRH…MIFE), 2281-2327 (KCKG…FSFS), 2333-2377 (QKLI…EVWD), 2402-2438 (KESK…LLLD), and 2443-2497 (RVIR…SIWD). 2295 to 2298 (DVST) lines the GTP pocket.

Belongs to the protein kinase superfamily. TKL Ser/Thr protein kinase family. Homodimer. Homotetramer; when activated by GTP-bound RAB29. Interacts with PRKN, PRDX3 and TPCN2. Interacts with VPS35. Interacts (via N-terminus) with RAB29; this interaction is direct and stimulates kinase activity. Interacts (via ROC domain) with SEC16A. Interacts with APP; interaction promotes phosphorylation of 'Thr-743' of APP. Interacts with MAPT. Interacts with RAB8A, RAB10, and RAB12. Interacts (via N-terminus) with RAB32. Interacts with YWHAG; this interaction is dependent on phosphorylation of Ser-910 and either Ser-935 or Ser-1444. Interacts with SFN; this interaction is dependent on phosphorylation of Ser-910 and/or Ser-935. Requires Mg(2+) as cofactor. Autophosphorylated at Ser-1292. Autophosphorylation is stimulated by RAB29. Phosphorylation of Ser-910 and Ser-935 or Ser-1444 facilitates interaction with YWHAG. Phosphorylation of Ser-910 and/or Ser-935 facilitates interaction with SFN. Post-translationally, ubiquitinated by TRIM1; undergoes 'Lys-48'-linked polyubiquitination leading to proteasomal degradation. Expressed in the brain (at protein level). Detected throughout the adult brain. Expressed in deep cerebral cortex layers, superficial cingulate cortex layers, the piriform cortex, hippocampal formation, caudate putamen, substantia nigra, the basolateral and basomedial anterior amygdala nuclei, reticular thalamic nucleus and also in the cerebellar granular cell layer. Highly expressed in the striatum, cortex and olfactory tubercle. Little or no expression in the substantia nigra, where dopaminergic neurons preferentially degenerate in Parkinson disease. Expression is particularly high in brain dopaminoceptive areas. High and strikingly specific expression in striatum and parts of cortex and no signals in dopamine neurons.

It is found in the cytoplasmic vesicle. The protein localises to the perikaryon. It localises to the cell projection. Its subcellular location is the axon. The protein resides in the dendrite. It is found in the golgi apparatus membrane. The protein localises to the endoplasmic reticulum membrane. It localises to the secretory vesicle. Its subcellular location is the synaptic vesicle membrane. The protein resides in the endosome. It is found in the lysosome. The protein localises to the mitochondrion outer membrane. It localises to the cytoplasm. Its subcellular location is the cytoskeleton. The protein resides in the phagosome. The catalysed reaction is L-threonyl-[protein] + ATP = O-phospho-L-threonyl-[protein] + ADP + H(+). It catalyses the reaction L-seryl-[protein] + ATP = O-phospho-L-seryl-[protein] + ADP + H(+). It carries out the reaction GTP + H2O = GDP + phosphate + H(+). Its activity is regulated as follows. Kinase activity is regulated by the GTPase activity of the ROC domain. GTP-bound LRRK2 kinase activity is stimulated by RAB29. Phosphorylation of RAB10 'Thr-73' is stimulated by RAB29 and RAB32. Inhibited by small molecule inhibitors MLi-2 and LRRK2-IN-1. Serine/threonine-protein kinase which phosphorylates a broad range of proteins involved in multiple processes such as neuronal plasticity, innate immunity, autophagy, and vesicle trafficking. Is a key regulator of RAB GTPases by regulating the GTP/GDP exchange and interaction partners of RABs through phosphorylation. Phosphorylates RAB3A, RAB3B, RAB3C, RAB3D, RAB8A, RAB8B, RAB10, RAB12, RAB29, RAB35, and RAB43. Regulates the RAB3IP-catalyzed GDP/GTP exchange for RAB8A through the phosphorylation of 'Thr-72' on RAB8A. Inhibits the interaction between RAB8A and GDI1 and/or GDI2 by phosphorylating 'Thr-72' on RAB8A. Regulates primary ciliogenesis through phosphorylation of RAB8A and RAB10, which promotes SHH signaling in the brain. Together with RAB29, plays a role in the retrograde trafficking pathway for recycling proteins, such as mannose-6-phosphate receptor (M6PR), between lysosomes and the Golgi apparatus in a retromer-dependent manner. Regulates neuronal process morphology in the intact central nervous system (CNS). Plays an important role in recruiting SEC16A to endoplasmic reticulum exit sites (ERES) and in regulating ER to Golgi vesicle-mediated transport and ERES organization. Positively regulates autophagy through a calcium-dependent activation of the CaMKK/AMPK signaling pathway. The process involves activation of nicotinic acid adenine dinucleotide phosphate (NAADP) receptors, increase in lysosomal pH, and calcium release from lysosomes. Phosphorylates PRDX3. By phosphorylating APP on 'Thr-743', which promotes the production and the nuclear translocation of the APP intracellular domain (AICD), regulates dopaminergic neuron apoptosis. Acts as a positive regulator of innate immunity by mediating phosphorylation of RIPK2 downstream of NOD1 and NOD2, thereby enhancing RIPK2 activation. Independent of its kinase activity, inhibits the proteasomal degradation of MAPT, thus promoting MAPT oligomerization and secretion. In addition, has GTPase activity via its Roc domain which regulates LRKK2 kinase activity. Recruited by RAB29/RAB7L1 to overloaded lysosomes where it phosphorylates and stabilizes RAB8A and RAB10 which promote lysosomal content release and suppress lysosomal enlargement through the EHBP1 and EHBP1L1 effector proteins. This Mus musculus (Mouse) protein is Leucine-rich repeat serine/threonine-protein kinase 2 (Lrrk2).